We begin with the raw amino-acid sequence, 232 residues long: 2-C-methyl-D-erythritol 4-phosphate cytidylyltransferase (232 aa).

This sequence belongs to the IspD/TarI cytidylyltransferase family. IspD subfamily.

It catalyses the reaction 2-C-methyl-D-erythritol 4-phosphate + CTP + H(+) = 4-CDP-2-C-methyl-D-erythritol + diphosphate. It participates in isoprenoid biosynthesis; isopentenyl diphosphate biosynthesis via DXP pathway; isopentenyl diphosphate from 1-deoxy-D-xylulose 5-phosphate: step 2/6. Catalyzes the formation of 4-diphosphocytidyl-2-C-methyl-D-erythritol from CTP and 2-C-methyl-D-erythritol 4-phosphate (MEP). This chain is 2-C-methyl-D-erythritol 4-phosphate cytidylyltransferase, found in Geobacter metallireducens (strain ATCC 53774 / DSM 7210 / GS-15).